A 342-amino-acid polypeptide reads, in one-letter code: Protein RecA (342 aa).

65-72 (GPESSGKT) serves as a coordination point for ATP.

The protein belongs to the RecA family.

The protein localises to the cytoplasm. Functionally, can catalyze the hydrolysis of ATP in the presence of single-stranded DNA, the ATP-dependent uptake of single-stranded DNA by duplex DNA, and the ATP-dependent hybridization of homologous single-stranded DNAs. It interacts with LexA causing its activation and leading to its autocatalytic cleavage. This Caldanaerobacter subterraneus subsp. tengcongensis (strain DSM 15242 / JCM 11007 / NBRC 100824 / MB4) (Thermoanaerobacter tengcongensis) protein is Protein RecA.